Consider the following 376-residue polypeptide: Chaperone protein DnaJ (376 aa).

One can recognise a J domain in the interval Asp-5–Gly-70. Residues Gly-132–Ser-210 form a CR-type zinc finger. Zn(2+)-binding residues include Cys-145, Cys-148, Cys-162, Cys-165, Cys-184, Cys-187, Cys-198, and Cys-201. 4 CXXCXGXG motif repeats span residues Cys-145–Gly-152, Cys-162–Gly-169, Cys-184–Gly-191, and Cys-198–Gly-205.

Belongs to the DnaJ family. As to quaternary structure, homodimer. Zn(2+) serves as cofactor.

It localises to the cytoplasm. In terms of biological role, participates actively in the response to hyperosmotic and heat shock by preventing the aggregation of stress-denatured proteins and by disaggregating proteins, also in an autonomous, DnaK-independent fashion. Unfolded proteins bind initially to DnaJ; upon interaction with the DnaJ-bound protein, DnaK hydrolyzes its bound ATP, resulting in the formation of a stable complex. GrpE releases ADP from DnaK; ATP binding to DnaK triggers the release of the substrate protein, thus completing the reaction cycle. Several rounds of ATP-dependent interactions between DnaJ, DnaK and GrpE are required for fully efficient folding. Also involved, together with DnaK and GrpE, in the DNA replication of plasmids through activation of initiation proteins. The protein is Chaperone protein DnaJ of Shewanella frigidimarina (strain NCIMB 400).